A 562-amino-acid chain; its full sequence is Urocanate hydratase (562 aa).

Residues 52-53 (GG), Gln-130, 176-178 (GMG), Glu-196, Arg-201, 242-243 (NA), 263-267 (QTSAH), 273-274 (YL), and Tyr-322 contribute to the NAD(+) site. Residue Cys-410 is part of the active site. NAD(+) is bound at residue Gly-492.

This sequence belongs to the urocanase family. Requires NAD(+) as cofactor.

It localises to the cytoplasm. It carries out the reaction 4-imidazolone-5-propanoate = trans-urocanate + H2O. It participates in amino-acid degradation; L-histidine degradation into L-glutamate; N-formimidoyl-L-glutamate from L-histidine: step 2/3. Functionally, catalyzes the conversion of urocanate to 4-imidazolone-5-propionate. This is Urocanate hydratase from Shewanella pealeana (strain ATCC 700345 / ANG-SQ1).